Here is a 396-residue protein sequence, read N- to C-terminus: NADH-quinone oxidoreductase subunit D (396 aa).

This sequence belongs to the complex I 49 kDa subunit family. As to quaternary structure, NDH-1 is composed of 14 different subunits. Subunits NuoB, C, D, E, F, and G constitute the peripheral sector of the complex.

The protein resides in the cell inner membrane. It carries out the reaction a quinone + NADH + 5 H(+)(in) = a quinol + NAD(+) + 4 H(+)(out). In terms of biological role, NDH-1 shuttles electrons from NADH, via FMN and iron-sulfur (Fe-S) centers, to quinones in the respiratory chain. The immediate electron acceptor for the enzyme in this species is believed to be ubiquinone. Couples the redox reaction to proton translocation (for every two electrons transferred, four hydrogen ions are translocated across the cytoplasmic membrane), and thus conserves the redox energy in a proton gradient. In Brucella melitensis biotype 1 (strain ATCC 23456 / CCUG 17765 / NCTC 10094 / 16M), this protein is NADH-quinone oxidoreductase subunit D.